A 526-amino-acid polypeptide reads, in one-letter code: Bifunctional purine biosynthesis protein PurH (526 aa).

One can recognise an MGS-like domain in the interval 1 to 145; that stretch reads MIRTALLSVS…KNHQDVTVLI (145 aa).

It belongs to the PurH family.

The enzyme catalyses (6R)-10-formyltetrahydrofolate + 5-amino-1-(5-phospho-beta-D-ribosyl)imidazole-4-carboxamide = 5-formamido-1-(5-phospho-D-ribosyl)imidazole-4-carboxamide + (6S)-5,6,7,8-tetrahydrofolate. The catalysed reaction is IMP + H2O = 5-formamido-1-(5-phospho-D-ribosyl)imidazole-4-carboxamide. The protein operates within purine metabolism; IMP biosynthesis via de novo pathway; 5-formamido-1-(5-phospho-D-ribosyl)imidazole-4-carboxamide from 5-amino-1-(5-phospho-D-ribosyl)imidazole-4-carboxamide (10-formyl THF route): step 1/1. It participates in purine metabolism; IMP biosynthesis via de novo pathway; IMP from 5-formamido-1-(5-phospho-D-ribosyl)imidazole-4-carboxamide: step 1/1. This is Bifunctional purine biosynthesis protein PurH from Polynucleobacter asymbioticus (strain DSM 18221 / CIP 109841 / QLW-P1DMWA-1) (Polynucleobacter necessarius subsp. asymbioticus).